A 2016-amino-acid polypeptide reads, in one-letter code: Sodium channel protein type 5 subunit alpha (2016 aa).

The Cytoplasmic portion of the chain corresponds to 1-129; the sequence is MANFLLPRGT…IRRAAVKILV (129 aa). The disordered stretch occupies residues 28-56; it reads MAEKQARGSTTLQESREGLPEEEAPRPQL. Ser-36 is modified (phosphoserine). Thr-38 is modified (phosphothreonine). Over residues 41-52 the composition is skewed to basic and acidic residues; the sequence is ESREGLPEEEAP. One copy of the I repeat lies at 113–420; that stretch reads VLSPFHPIRR…VVAMAYEEQN (308 aa). Residues 130 to 149 form a helical membrane-spanning segment; the sequence is HSLFNMLIMCTILTNCVFMA. The Extracellular segment spans residues 150-157; that stretch reads QHDPPPWT. A helical membrane pass occupies residues 158–179; the sequence is KYVEYTFTAIYTFESLVKILAR. Over 180-188 the chain is Cytoplasmic; the sequence is GFCLHAFTF. A helical membrane pass occupies residues 189–209; sequence LRDPWNWLDFSVIIMAYTTEF. Over 210–216 the chain is Extracellular; that stretch reads VDLGNVS. A glycan (N-linked (GlcNAc...) asparagine) is linked at Asn-214. The chain crosses the membrane as a helical span at residues 217–236; sequence ALRTFRVLRALKTISVISGL. At 237 to 249 the chain is on the cytoplasmic side; it reads KTIVGALIQSVKK. The helical transmembrane segment at 250–272 threads the bilayer; the sequence is LADVMVLTVFCLSVFALIGLQLF. At 273-357 the chain is on the extracellular side; that stretch reads MGNLRHKCVR…PDHGYTSFDS (85 aa). Cys-280 and Cys-335 are oxidised to a cystine. Asn-283, Asn-288, Asn-291, Asn-318, and Asn-328 each carry an N-linked (GlcNAc...) asparagine glycan. The pore-forming intramembrane region spans 358–378; sequence FAWAFLALFRLMTQDCWERLY. At 379–386 the chain is on the extracellular side; that stretch reads QQTLRSAG. A helical transmembrane segment spans residues 387 to 413; the sequence is KIYMIFFMLVIFLGSFYLVNLILAVVA. Residues 414–719 lie on the Cytoplasmic side of the membrane; the sequence is MAYEEQNQAT…VKLVVMDPFT (306 aa). Ser-457, Ser-460, Ser-483, and Ser-484 each carry phosphoserine. The tract at residues 461–591 is disordered; it reads LEMSPLAPVN…APGHALHGKK (131 aa). Thr-486 carries the post-translational modification Phosphothreonine. A compositionally biased stretch (basic and acidic residues) spans 491–503; the sequence is EDRLPKSDSEDGP. 2 positions are modified to phosphoserine: Ser-497 and Ser-510. Residues 509-528 are compositionally biased toward polar residues; that stretch reads LSLTRGLSRTSMKPRSSRGS. Dimethylated arginine; alternate occurs at positions 513 and 526. Residues Arg-513 and Arg-526 each carry the omega-N-methylarginine; alternate modification. A phosphoserine mark is found at Ser-539, Ser-571, Ser-664, and Ser-667. Positions 570 to 580 are enriched in polar residues; it reads TSAQGQPSPGT. Position 680 is a dimethylated arginine; alternate (Arg-680). Arg-680 carries the post-translational modification Omega-N-methylarginine; alternate. Residues 699–969 form an II repeat; that stretch reads CCPLWMSIKQ…QLALARIQRG (271 aa). The helical transmembrane segment at 720–737 threads the bilayer; sequence DLTITMCIVLNTLFMALE. The Extracellular segment spans residues 738-746; the sequence is HYNMTSEFE. Asn-740 is a glycosylation site (N-linked (GlcNAc...) asparagine). The chain crosses the membrane as a helical span at residues 747–769; that stretch reads EMLQVGNLVFTGIFTAEMTFKII. Over 770-775 the chain is Cytoplasmic; sequence ALDPYY. The helical transmembrane segment at 776 to 796 threads the bilayer; sequence YFQQGWNIFDSIIVILSLMEL. The Extracellular segment spans residues 797–806; it reads GLSRMSNLSV. N-linked (GlcNAc...) asparagine glycosylation is present at Asn-803. The helical transmembrane segment at 807-821 threads the bilayer; the sequence is LRSFRLLRVFKLAKS. At 822–838 the chain is on the cytoplasmic side; sequence WPTLNTLIKIIGNSVGA. A helical transmembrane segment spans residues 839–860; that stretch reads LGNLTLVLAIIVFIFAVVGMQL. The Extracellular portion of the chain corresponds to 861-884; it reads FGKNYSELRDSDSGLLPRWHMMDF. Asn-864 carries N-linked (GlcNAc...) asparagine glycosylation. Residues 885 to 903 constitute an intramembrane region (pore-forming); the sequence is FHAFLIIFRILCGEWIETM. Residues 904 to 912 are Extracellular-facing; that stretch reads WDCMEVSGQ. Cys-906 and Cys-915 form a disulfide bridge. A helical membrane pass occupies residues 913-941; that stretch reads SLCLLVFLLVMVIGNLVVLNLFLALLLSS. Topologically, residues 942–1203 are cytoplasmic; that stretch reads FSADNLTAPD…LRKTCYHIVE (262 aa). A disordered region spans residues 1005 to 1141; the sequence is IATPYSPPPP…PEDSCSEGST (137 aa). Residues 1015-1030 show a composition bias toward basic and acidic residues; it reads ETEKVPPTRKETRFEE. Residues 1033 to 1044 show a composition bias toward low complexity; that stretch reads QPGQGTPGDPEP. Over residues 1054 to 1071 the composition is skewed to acidic residues; that stretch reads SDTDDQEEDEENSLGTEE. Positions 1096-1113 are enriched in low complexity; that stretch reads SQVSATASSEAEASASQA. One copy of the III repeat lies at 1187 to 1501; the sequence is PGKVWWRLRK…KKYYNAMKKL (315 aa). The chain crosses the membrane as a helical span at residues 1204 to 1225; sequence HSWFETFIIFMILLSSGALAFE. Over 1226–1236 the chain is Extracellular; it reads DIYLEERKTIK. The chain crosses the membrane as a helical span at residues 1237–1259; sequence VLLEYADKMFTYVFVLEMLLKWV. The Cytoplasmic segment spans residues 1260–1268; the sequence is AYGFKKYFT. The chain crosses the membrane as a helical span at residues 1269 to 1291; it reads NAWCWLDFLIVDVSLVSLVANTL. The Extracellular segment spans residues 1292–1297; the sequence is GFAEMG. Residues 1298 to 1317 traverse the membrane as a helical segment; that stretch reads PIKSLRTLRALRPLRALSRF. Residues 1318–1330 lie on the Cytoplasmic side of the membrane; the sequence is EGMRVVVNALVGA. A helical membrane pass occupies residues 1331-1355; sequence IPSIMNVLLVCLIFWLIFSIMGVNL. Residues 1356–1400 are Extracellular-facing; sequence FAGKFGRCINQTEGDLPLNYTIVNNKSQCESLNLTGELYWTKVKV. 4 N-linked (GlcNAc...) asparagine glycosylation sites follow: Asn-1365, Asn-1374, Asn-1380, and Asn-1388. The segment at residues 1401-1422 is an intramembrane region (pore-forming); sequence NFDNVGAGYLALLQVATFKGWM. The Extracellular portion of the chain corresponds to 1423–1445; sequence DIMYAAVDSRGYEEQPQWEYNLY. A helical transmembrane segment spans residues 1446-1470; it reads MYIYFVIFIIFGSFFTLNLFIGVII. The Cytoplasmic portion of the chain corresponds to 1471-1528; it reads DNFNQQKKKLGGQDIFMTEEQKKYYNAMKKLGSKKPQKPIPRPLNKYQGFIFDIVTKQ. Position 1503 is a phosphoserine; by PKC (Ser-1503). The IV repeat unit spans residues 1510-1807; it reads IPRPLNKYQG…WEKFDPEATQ (298 aa). A helical membrane pass occupies residues 1529–1547; it reads AFDVTIMFLICLNMVTMMV. Over 1548-1558 the chain is Extracellular; it reads ETDDQSPEKIN. A helical transmembrane segment spans residues 1559 to 1580; it reads ILAKINLLFVAIFTGECIVKLA. Residues 1581-1589 lie on the Cytoplasmic side of the membrane; sequence ALRHYYFTN. A helical membrane pass occupies residues 1590–1612; that stretch reads SWNIFDFVVVILSIVGTVLSDII. The Extracellular portion of the chain corresponds to 1613–1619; sequence QKYFFSP. A helical transmembrane segment spans residues 1620–1640; the sequence is TLFRVIRLARIGRILRLIRGA. The Cytoplasmic portion of the chain corresponds to 1641–1650; the sequence is KGIRTLLFAL. The chain crosses the membrane as a helical span at residues 1651–1679; sequence MMSLPALFNIGLLLFLVMFIYSIFGMANF. The Extracellular segment spans residues 1680–1697; sequence AYVKWEAGIDDMFNFQTF. An intramembrane region (pore-forming) is located at residues 1698 to 1714; that stretch reads ANSMLCLFQITTSAGWD. Over 1715-1745 the chain is Extracellular; sequence GLLSPILNTGPPYCDPTLPNSNGSRGDCGSP. Residue Asn-1736 is glycosylated (N-linked (GlcNAc...) asparagine). The helical transmembrane segment at 1746–1771 threads the bilayer; that stretch reads AVGILFFTTYIIISFLIVVNMYIAII. Topologically, residues 1772 to 2016 are cytoplasmic; it reads LENFSVATEE…SPDRDRESIV (245 aa). Positions 1839 to 1901 are interaction with FGF13; it reads DLPMVSGDRI…ITTTLRRKHE (63 aa). The 30-residue stretch at 1901 to 1930 folds into the IQ domain; sequence EEVSAMVIQRAFRRHLLQRSLKHASFLFRQ. Residues 1959–1979 show a composition bias toward low complexity; sequence PLGPPSSSSISSTSFPPSYDS. Residues 1959-2016 form a disordered region; it reads PLGPPSSSSISSTSFPPSYDSVTRATSDNLQVRGSDYSHSEDLADFPPSPDRDRESIV. Residues 1974 to 1977 form an interaction with NEDD4, NEDD4L and WWP2 region; sequence PPSY. Residues 1981–1990 show a composition bias toward polar residues; that stretch reads TRATSDNLQV.

It belongs to the sodium channel (TC 1.A.1.10) family. Nav1.5/SCN5A subfamily. In terms of assembly, cannot form the same regulatory interactions with beta subunits as other Navs do. Interacts with the PDZ domain of the syntrophin SNTA1, SNTB1 and SNTB2. Interacts with NEDD4, NEDD4L, WWP2 and GPD1L. Interacts with CALM. Interacts with FGF13; the interaction is direct and FGF13 may regulate SNC5A density at membranes and function. May also interact with FGF12 and FGF14. Interacts with TMEM233. Interacts with the spider Jingzhaotoxin-I (AC P83974, AC B1P1B7, AC B1P1B8). Interacts with ANK3. Interacts with PKP2 (via N-terminus). Interacts with XIRP2; the interaction is required for normal action potential configuration in the heart. Ubiquitinated by NEDD4L; which promotes its endocytosis. Does not seem to be ubiquitinated by NEDD4 or WWP2. In terms of processing, phosphorylation at Ser-1503 by PKC in a highly conserved cytoplasmic loop slows inactivation of the sodium channel and reduces peak sodium currents. Regulated through phosphorylation by CaMK2D. Post-translationally, lacks the cysteine which covalently binds the conotoxin GVIIJ. This cysteine (position 868) is speculated in other sodium channel subunits alpha to be implied in covalent binding with the sodium channel subunit beta-2 or beta-4. N-glycosylated at Asn-318, probably hinders potential interaction with regulatory subunits. In terms of tissue distribution, found in jejunal circular smooth muscle cells (at protein level). Expressed in human atrial and ventricular cardiac muscle but not in adult skeletal muscle, brain, myometrium, liver, or spleen. Isoform 4 is expressed in brain.

The protein resides in the cell membrane. The protein localises to the cytoplasm. It is found in the perinuclear region. Its subcellular location is the sarcolemma. It localises to the T-tubule. The protein resides in the cell junction. It catalyses the reaction Na(+)(in) = Na(+)(out). Its activity is regulated as follows. Channel inactivation is regulated by intracellular calcium levels. It is a tetrodotoxin-resistant voltage-gated Na(+) channel (Nav). Pore-forming subunit of Nav1.5, a voltage-gated sodium (Nav) channel that directly mediates the depolarizing phase of action potentials in excitable membranes. Navs, also called VGSCs (voltage-gated sodium channels) or VDSCs (voltage-dependent sodium channels), operate by switching between closed and open conformations depending on the voltage difference across the membrane. In the open conformation they allow Na(+) ions to selectively pass through the pore, along their electrochemical gradient. The influx of Na(+) ions provokes membrane depolarization, initiating the propagation of electrical signals throughout cells and tissues. Nav1.5 is the predominant sodium channel expressed in myocardial cells and it is responsible for the initial upstroke of the action potential in cardiac myocytes, thereby initiating the heartbeat. Required for normal electrical conduction including formation of the infranodal ventricular conduction system and normal action potential configuration, as a result of its interaction with XIRP2. The protein is Sodium channel protein type 5 subunit alpha of Homo sapiens (Human).